We begin with the raw amino-acid sequence, 511 residues long: DNA nucleotidylexotransferase (511 aa).

The disordered stretch occupies residues 1-26; it reads MDPLQTAHAGPRKKRPRQTGASMAST. The Nuclear localization signal signature appears at 11–17; that stretch reads PRKKRPR. The region spanning 27–124 is the BRCT domain; sequence PQDVRFQDLV…KPVETTGKHQ (98 aa). Ser134 bears the Phosphoserine mark. Residues 151 to 511 are mediates interaction with DNTTIP2; the sequence is SQYACQRRTT…DYIEPSERNA (361 aa). The segment at 258–262 is involved in DNA binding; sequence VGLKT. Residues 333-338 and 342-345 contribute to the a 2'-deoxyribonucleoside 5'-triphosphate site; these read GFRRGK and HDVD. Mg(2+)-binding residues include Asp343, Asp345, and Asp435. Position 450–451 (450–451) interacts with a 2'-deoxyribonucleoside 5'-triphosphate; sequence GW.

It belongs to the DNA polymerase type-X family. Interacts with PRP19 and DNTTIP1. Forms a ternary complex with DNTTIP2 and core histone. Released from this complex by PCNA. Interacts with TRERF1. Requires Mg(2+) as cofactor.

It localises to the nucleus. It catalyses the reaction DNA(n) + a 2'-deoxyribonucleoside 5'-triphosphate = DNA(n+1) + diphosphate. Functionally, template-independent DNA polymerase which catalyzes the random addition of deoxynucleoside 5'-triphosphate to the 3'-end of a DNA initiator. One of the in vivo functions of this enzyme is the addition of nucleotides at the junction (N region) of rearranged Ig heavy chain and T-cell receptor gene segments during the maturation of B- and T-cells. This Eulemur macaco (Black lemur) protein is DNA nucleotidylexotransferase (DNTT).